Reading from the N-terminus, the 364-residue chain is GTPase Obg (364 aa).

One can recognise an Obg domain in the interval 1–159 (MKFLDEAKVY…KTIWLHLKLI (159 aa)). The 168-residue stretch at 160–327 (ADAGLVGLPN…VLRALRDIIV (168 aa)) folds into the OBG-type G domain. Residues 166 to 173 (GLPNAGKS), 191 to 195 (FTTLH), 212 to 215 (DIPG), 279 to 282 (SQID), and 308 to 310 (SAV) contribute to the GTP site. Positions 173 and 193 each coordinate Mg(2+). The disordered stretch occupies residues 333-364 (EKPAKVPKLRHRDMVVTDEGEDKGGDEGDDQP).

This sequence belongs to the TRAFAC class OBG-HflX-like GTPase superfamily. OBG GTPase family. Monomer. Mg(2+) is required as a cofactor.

The protein resides in the cytoplasm. Functionally, an essential GTPase which binds GTP, GDP and possibly (p)ppGpp with moderate affinity, with high nucleotide exchange rates and a fairly low GTP hydrolysis rate. Plays a role in control of the cell cycle, stress response, ribosome biogenesis and in those bacteria that undergo differentiation, in morphogenesis control. This is GTPase Obg from Rhizobium johnstonii (strain DSM 114642 / LMG 32736 / 3841) (Rhizobium leguminosarum bv. viciae).